We begin with the raw amino-acid sequence, 342 residues long: MTHLTLTRPDDWHIHLRDGDSLADTVRDAGRYMGRAIVMPNLVPPVTTTEAAIAYYERIKAHSSTAFEPLMVLYLTDKTSPDEIRAAKASGKVVAAKLYPAGATTNSDSGVTDVNNIYGVLKAMEEEGLLLLVHGEVTDSAIDIFDRERIFIENILSKVVADFPGLKIVLEHITTKDAVDFVMSAGDNVAATITAHHLLYNRNHMLAGGIRPHFYCLPILKRNTHQQALLAAATSGSKKFFLGTDSAPHAKDKKEAACGCAGSYTAHAALELYAEAFEAEGALDKLEAFASFNGPDFYGLPRNADTVALVKSPWQVPESYPLGSTTVVPIRAGEIIGWKVED.

His-13 and His-15 together coordinate Zn(2+). Substrate contacts are provided by residues 15–17 and Asn-41; that span reads HLR. 3 residues coordinate Zn(2+): Lys-97, His-134, and His-172. Position 97 is an N6-carboxylysine (Lys-97). His-134 contributes to the substrate binding site. Substrate is bound at residue Leu-217. Asp-245 lines the Zn(2+) pocket. Asp-245 is a catalytic residue. His-249 and Ala-261 together coordinate substrate.

This sequence belongs to the metallo-dependent hydrolases superfamily. DHOase family. Class II DHOase subfamily. In terms of assembly, homodimer. Zn(2+) serves as cofactor.

The enzyme catalyses (S)-dihydroorotate + H2O = N-carbamoyl-L-aspartate + H(+). It participates in pyrimidine metabolism; UMP biosynthesis via de novo pathway; (S)-dihydroorotate from bicarbonate: step 3/3. Catalyzes the reversible cyclization of carbamoyl aspartate to dihydroorotate. The polypeptide is Dihydroorotase (Shewanella amazonensis (strain ATCC BAA-1098 / SB2B)).